The primary structure comprises 99 residues: HTH-type transcriptional regulator YgaV (99 aa).

One can recognise an HTH arsR-type domain in the interval 7-99 (LQASAEQAAA…IATLKNVYCP (93 aa)). Positions 41–64 (AGELTRITGLSASATSQHLARMRD) form a DNA-binding region, H-T-H motif.

In the presence of H(2)S, two cysteine residues form an intramolecular tetrasulfide bond, which attenuates the binding of YgaV to DNA. Both unmodified YgaV and sulfide-modified YgaV can probably function as either a repressor or an activator. Binds heme, which may influence the DNA-binding affinity. In terms of biological role, transcriptional regulator that regulates large-scale gene expression in response to sulfide. May act as a global regulator responsible for redox homeostasis. It functions as both a repressor and an activator. In the absence of sulfide compounds, it negatively regulates many anaerobic respiratory genes, including formate, fumarate, lactate, nitrate and nitrite reductase genes. In the presence of hydrogen sulfide (H(2)S), YgaV activity is attenuated, leading to the expression of anaerobic respiratory and ROS scavenging genes, which contributes to redox homeostasis, reactive oxygen species (ROS) scavenging and antibiotic tolerance. It responds to H(2)O(2) scavenging and increases antibiotic tolerance under H(2)S-atmospheric conditions. It also negatively regulates its own expression by binding to the ygaVP promoter region. May also be involved in regulatory mechanisms that operate independently of sulfide. In Escherichia coli (strain K12), this protein is HTH-type transcriptional regulator YgaV (ygaV).